Consider the following 2837-residue polypeptide: Probable polyketide synthase 3 (2837 aa).

Positions 39 to 464 (NNGIGIIGIG…GSNVCIILKD (426 aa)) constitute a Ketosynthase family 3 (KS3) domain. Catalysis depends on for beta-ketoacyl synthase activity residues Cys-209, His-348, and His-388. Residues 664-697 (GIKPTFIVGHSLGEVTAAYCSGMIDLETECYLIY) form an acyl/malonyl transferase region. Ser-674 acts as the For acyl/malonyl transferase activity in catalysis. An N-terminal hotdog fold region spans residues 962 to 1084 (IDILGNSITD…GNFQLFKHNG (123 aa)). The PKS/mFAS DH domain occupies 962–1255 (IDILGNSITD…CTSLTPIQDS (294 aa)). Catalysis depends on His-995, which acts as the Proton acceptor; for dehydratase activity. The interval 1106–1255 (NLTKLTKEDL…CTSLTPIQDS (150 aa)) is C-terminal hotdog fold. Asp-1169 functions as the Proton donor; for dehydratase activity in the catalytic mechanism. Positions 2330-2407 (DNKNSVNQMF…SSIKIITNSL (78 aa)) constitute a Carrier domain. Ser-2367 bears the O-(pantetheine 4'-phosphoryl)serine mark. The chain crosses the membrane as a helical span at residues 2464-2484 (KVILLSGSTGFLGGYLLLNLV).

The cofactor is pantetheine 4'-phosphate.

It localises to the membrane. Its function is as follows. Probable polyketide synthase. The chain is Probable polyketide synthase 3 (pks3) from Dictyostelium discoideum (Social amoeba).